The primary structure comprises 484 residues: tRNA sulfurtransferase (484 aa).

In terms of domain architecture, THUMP spans 63 to 167 (ERLVEALKCI…NKDLFIVTQR (105 aa)). ATP-binding positions include 185–186 (LM), Lys-267, Gly-289, and Gln-298. A disulfide bridge links Cys-346 with Cys-458. A Rhodanese domain is found at 406-484 (IPENAVVVDI…GFKNVKVYRP (79 aa)). Catalysis depends on Cys-458, which acts as the Cysteine persulfide intermediate.

This sequence belongs to the ThiI family.

Its subcellular location is the cytoplasm. It catalyses the reaction [ThiI sulfur-carrier protein]-S-sulfanyl-L-cysteine + a uridine in tRNA + 2 reduced [2Fe-2S]-[ferredoxin] + ATP + H(+) = [ThiI sulfur-carrier protein]-L-cysteine + a 4-thiouridine in tRNA + 2 oxidized [2Fe-2S]-[ferredoxin] + AMP + diphosphate. The catalysed reaction is [ThiS sulfur-carrier protein]-C-terminal Gly-Gly-AMP + S-sulfanyl-L-cysteinyl-[cysteine desulfurase] + AH2 = [ThiS sulfur-carrier protein]-C-terminal-Gly-aminoethanethioate + L-cysteinyl-[cysteine desulfurase] + A + AMP + 2 H(+). It functions in the pathway cofactor biosynthesis; thiamine diphosphate biosynthesis. Functionally, catalyzes the ATP-dependent transfer of a sulfur to tRNA to produce 4-thiouridine in position 8 of tRNAs, which functions as a near-UV photosensor. Also catalyzes the transfer of sulfur to the sulfur carrier protein ThiS, forming ThiS-thiocarboxylate. This is a step in the synthesis of thiazole, in the thiamine biosynthesis pathway. The sulfur is donated as persulfide by IscS. This chain is tRNA sulfurtransferase, found in Colwellia psychrerythraea (strain 34H / ATCC BAA-681) (Vibrio psychroerythus).